The sequence spans 481 residues: Tryptophan--tRNA ligase, cytoplasmic (481 aa).

Residues 12–68 (SPLELFNSIAAQGELVRSLKAGNAPKDEIESAVKMLLSLKMNYKTAMGEEYKAGCPP) form the WHEP-TRS domain. Residues 65-85 (GCPPGNSTAGSNGDPDATKAS) form a disordered region. K158 is modified (N6-succinyllysine). The 'HIGH' region signature appears at 168 to 177 (PSSEAMHLGH). The 'KMSKS' region signature appears at 353 to 357 (KMSAS). Position 355 is a phosphoserine (S355).

Belongs to the class-I aminoacyl-tRNA synthetase family. As to quaternary structure, homodimer. Interacts with oxidized form of GAPDH. Post-translationally, proteolytic cleavage generates 2 forms; T1-TrpRS and T2-TrpRS.

It is found in the cytoplasm. It carries out the reaction tRNA(Trp) + L-tryptophan + ATP = L-tryptophyl-tRNA(Trp) + AMP + diphosphate + H(+). Functionally, catalyzes the attachment of tryptophan to tRNA(Trp) in a two-step reaction: tryptophan is first activated by ATP to form Trp-AMP and then transferred to the acceptor end of the tRNA(Trp). Could also possess an angiostatic activity. This is Tryptophan--tRNA ligase, cytoplasmic from Rattus norvegicus (Rat).